The chain runs to 393 residues: uncharacterized protein (393 aa).

Belongs to the Gfo/Idh/MocA family.

This is an uncharacterized protein from Bacillus subtilis (strain 168).